The chain runs to 206 residues: Large ribosomal subunit protein uL4 (206 aa).

The segment at 43-78 (ARSGNRKQKDREEVHHTTKKPWRQKGTGRARAGMSS) is disordered. Positions 49 to 58 (KQKDREEVHH) are enriched in basic and acidic residues. Over residues 59–70 (TTKKPWRQKGTG) the composition is skewed to basic residues.

This sequence belongs to the universal ribosomal protein uL4 family. In terms of assembly, part of the 50S ribosomal subunit.

In terms of biological role, one of the primary rRNA binding proteins, this protein initially binds near the 5'-end of the 23S rRNA. It is important during the early stages of 50S assembly. It makes multiple contacts with different domains of the 23S rRNA in the assembled 50S subunit and ribosome. Functionally, forms part of the polypeptide exit tunnel. The protein is Large ribosomal subunit protein uL4 of Janthinobacterium sp. (strain Marseille) (Minibacterium massiliensis).